The primary structure comprises 210 residues: Imidazoleglycerol-phosphate dehydratase (210 aa).

The protein belongs to the imidazoleglycerol-phosphate dehydratase family.

Its subcellular location is the cytoplasm. It catalyses the reaction D-erythro-1-(imidazol-4-yl)glycerol 3-phosphate = 3-(imidazol-4-yl)-2-oxopropyl phosphate + H2O. It functions in the pathway amino-acid biosynthesis; L-histidine biosynthesis; L-histidine from 5-phospho-alpha-D-ribose 1-diphosphate: step 6/9. The polypeptide is Imidazoleglycerol-phosphate dehydratase (Acidovorax ebreus (strain TPSY) (Diaphorobacter sp. (strain TPSY))).